Reading from the N-terminus, the 119-residue chain is Fluoride-specific ion channel FluC 1 (119 aa).

The next 4 membrane-spanning stretches (helical) occupy residues 2 to 22, 37 to 57, 62 to 82, and 99 to 119; these read TGAVAPPAVLVAAGGALGAVL, AGTLVVNVVGSFVLAALTFAA, TMLLFGTGACGAFTTFASFSV, and HALGNLLGAGLAVALAWLLVA. Positions 72 and 75 each coordinate Na(+).

This sequence belongs to the fluoride channel Fluc/FEX (TC 1.A.43) family.

The protein resides in the cell membrane. The catalysed reaction is fluoride(in) = fluoride(out). Na(+) is not transported, but it plays an essential structural role and its presence is essential for fluoride channel function. Its function is as follows. Fluoride-specific ion channel. Important for reducing fluoride concentration in the cell, thus reducing its toxicity. The polypeptide is Fluoride-specific ion channel FluC 1 (Halobacterium salinarum (strain ATCC 700922 / JCM 11081 / NRC-1) (Halobacterium halobium)).